The primary structure comprises 418 residues: Sonic hedgehog protein (418 aa).

An N-terminal signal peptide occupies residues 1–23 (MRLLTRVLLVSLLTLSLVVSGLA). Cysteine 24 carries N-palmitoyl cysteine lipidation. A Cardin-Weintraub motif is present at residues 32-38 (RRRHPKK). Ca(2+)-binding residues include glutamate 89, glutamate 90, aspartate 95, threonine 125, glutamate 126, aspartate 129, and aspartate 131. Positions 140, 147, and 182 each coordinate Zn(2+). Glycine 197 is lipidated: Cholesterol glycine ester.

This sequence belongs to the hedgehog family. In terms of assembly, interacts with HHATL/GUP1 which negatively regulates HHAT-mediated palmitoylation of the SHH N-terminus. Interacts with BOC and CDON. Interacts with HHIP. Interacts with DISP1 via its cholesterol anchor. Interacts with SCUBE2. Multimer. In terms of processing, the C-terminal domain displays an autoproteolysis activity and a cholesterol transferase activity. Both activities result in the cleavage of the full-length protein and covalent attachment of a cholesterol moiety to the C-terminal of the newly generated N-terminal fragment (ShhN). Cholesterylation is required for the sonic hedgehog protein N-product targeting to lipid rafts and multimerization. ShhN is the active species in both local and long-range signaling, whereas the C-product (ShhC) is degraded in the reticulum endoplasmic. Post-translationally, N-palmitoylation by HHAT of ShhN is required for sonic hedgehog protein N-product multimerization and full activity. It is a prerequisite for the membrane-proximal positioning and the subsequent shedding of this N-terminal peptide. The lipidated N- and C-terminal peptides of ShhNp can be cleaved (shedding). The N-terminal palmitoylated peptide is cleaved at the Cardin-Weintraub (CW) motif site. The cleavage reduced the interactions with heparan sulfate. The cleavage is enhanced by SCUBE2. Expressed in the ventral midline of the neural tube and brain. Also found in the notochord and in developing fin bud. In the developing brain, expression occurs in domains that include a discrete region in the floor of the diencephalon.

It is found in the endoplasmic reticulum membrane. Its subcellular location is the golgi apparatus membrane. It localises to the cell membrane. It catalyses the reaction glycyl-L-cysteinyl-[protein] + cholesterol + H(+) = [protein]-C-terminal glycyl cholesterol ester + N-terminal L-cysteinyl-[protein]. In terms of biological role, the C-terminal part of the sonic hedgehog protein precursor displays an autoproteolysis and a cholesterol transferase activity. Both activities result in the cleavage of the full-length protein into two parts (ShhN and ShhC) followed by the covalent attachment of a cholesterol moiety to the C-terminal of the newly generated ShhN. Both activities occur in the endoplasmic reticulum. Once cleaved, ShhC is degraded in the endoplasmic reticulum. Its function is as follows. The dually lipidated sonic hedgehog protein N-product (ShhNp) is a morphogen which is essential for a variety of patterning events during development. Involved in dorso-ventral patterning of the brain and in early patterning of the developing eyes. Binds to the patched (PTCH1) receptor, which functions in association with smoothened (SMO), to activate the transcription of target genes. In the absence of SHH, PTCH1 represses the constitutive signaling activity of SMO. This Danio rerio (Zebrafish) protein is Sonic hedgehog protein (shha).